The following is a 190-amino-acid chain: Lipid A acyltransferase PagP (190 aa).

The signal sequence occupies residues 1–29 (MYVAMIIRKYFLIIALLVMPWLAIPSVSA). Catalysis depends on residues His-62, Asp-105, and Ser-106.

This sequence belongs to the lipid A palmitoyltransferase family. In terms of assembly, homodimer.

The protein resides in the cell outer membrane. The catalysed reaction is a lipid A + a 1,2-diacyl-sn-glycero-3-phosphocholine = a hepta-acyl lipid A + a 2-acyl-sn-glycero-3-phosphocholine. It carries out the reaction a lipid IVA + a 1,2-diacyl-sn-glycero-3-phosphocholine = a lipid IVB + a 2-acyl-sn-glycero-3-phosphocholine. The enzyme catalyses a lipid IIA + a 1,2-diacyl-sn-glycero-3-phosphocholine = a lipid IIB + a 2-acyl-sn-glycero-3-phosphocholine. Transfers a fatty acid residue from the sn-1 position of a phospholipid to the N-linked hydroxyfatty acid chain on the proximal unit of lipid A or its precursors. In Salmonella typhi, this protein is Lipid A acyltransferase PagP.